Consider the following 405-residue polypeptide: Acetylornithine/succinyldiaminopimelate aminotransferase (405 aa).

Pyridoxal 5'-phosphate is bound by residues 107-108 (GA) and F140. Position 143 (R143) interacts with N(2)-acetyl-L-ornithine. 225–228 (DEVQ) provides a ligand contact to pyridoxal 5'-phosphate. At K254 the chain carries N6-(pyridoxal phosphate)lysine. A N(2)-acetyl-L-ornithine-binding site is contributed by T282. A pyridoxal 5'-phosphate-binding site is contributed by T283.

The protein belongs to the class-III pyridoxal-phosphate-dependent aminotransferase family. ArgD subfamily. In terms of assembly, homodimer. The cofactor is pyridoxal 5'-phosphate.

The protein localises to the cytoplasm. It carries out the reaction N(2)-acetyl-L-ornithine + 2-oxoglutarate = N-acetyl-L-glutamate 5-semialdehyde + L-glutamate. The catalysed reaction is N-succinyl-(2S,6S)-2,6-diaminopimelate + 2-oxoglutarate = (S)-2-succinylamino-6-oxoheptanedioate + L-glutamate. It functions in the pathway amino-acid biosynthesis; L-arginine biosynthesis; N(2)-acetyl-L-ornithine from L-glutamate: step 4/4. It participates in amino-acid biosynthesis; L-lysine biosynthesis via DAP pathway; LL-2,6-diaminopimelate from (S)-tetrahydrodipicolinate (succinylase route): step 2/3. In terms of biological role, involved in both the arginine and lysine biosynthetic pathways. The chain is Acetylornithine/succinyldiaminopimelate aminotransferase from Yersinia pestis.